Here is a 420-residue protein sequence, read N- to C-terminus: Glutamate dehydrogenase (420 aa).

K105 is an active-site residue. An NAD(+)-binding site is contributed by 220–226 (GYGNAGY).

Belongs to the Glu/Leu/Phe/Val dehydrogenases family. Homohexamer.

The protein resides in the cytoplasm. The catalysed reaction is L-glutamate + NAD(+) + H2O = 2-oxoglutarate + NH4(+) + NADH + H(+). It carries out the reaction L-glutamate + NADP(+) + H2O = 2-oxoglutarate + NH4(+) + NADPH + H(+). The sequence is that of Glutamate dehydrogenase (gdhA) from Pyrococcus furiosus (strain ATCC 43587 / DSM 3638 / JCM 8422 / Vc1).